The primary structure comprises 108 residues: Replication restart protein PriB (108 aa).

Positions 8-108 constitute an SSB domain; sequence VDNRFSLIGK…LHAEQIEFIE (101 aa).

This sequence belongs to the PriB family. As to quaternary structure, homodimer. Interacts with PriA and DnaT. Component of the replication restart primosome. Primosome assembly occurs via a 'hand-off' mechanism. PriA binds to replication forks, subsequently PriB then DnaT bind; DnaT then displaces ssDNA to generate the helicase loading substrate.

Its function is as follows. Involved in the restart of stalled replication forks, which reloads the replicative helicase on sites other than the origin of replication; the PriA-PriB pathway is the major replication restart pathway. During primosome assembly it facilitates complex formation between PriA and DnaT on DNA; stabilizes PriA on DNA. Stimulates the DNA unwinding activity of PriA helicase. This Histophilus somni (strain 129Pt) (Haemophilus somnus) protein is Replication restart protein PriB.